A 1403-amino-acid chain; its full sequence is Baculoviral IAP repeat-containing protein 1a (1403 aa).

BIR repeat units lie at residues Arg-63–Gln-128, Arg-162–Gln-228, and Arg-281–Gln-346. Residues Cys-315, Cys-318, His-335, and Cys-342 each contribute to the Zn(2+) site. In terms of domain architecture, NACHT spans Ser-464–Glu-758. Lys-476 is a binding site for ATP.

As to quaternary structure, interacts (via NACHT domain) with APAF1 (via CARD and NACHT domains).

Its function is as follows. Anti-apoptotic protein which acts by inhibiting the activities of CASP3, CASP7 and CASP9. Can inhibit the autocleavage of pro-CASP9 and cleavage of pro-CASP3 by CASP9. Capable of inhibiting CASP9 autoproteolysis at 'Asp-315' and decreasing the rate of auto proteolysis at 'Asp-330'. Acts as a mediator of neuronal survival in pathological conditions. Prevents motor-neuron apoptosis induced by a variety of signals. The polypeptide is Baculoviral IAP repeat-containing protein 1a (Naip1) (Mus musculus (Mouse)).